A 118-amino-acid chain; its full sequence is Na(+)/H(+) antiporter subunit G1 (118 aa).

The next 3 helical transmembrane spans lie at 9–29, 41–61, and 70–90; these read IALI…IGIL, AGKA…LFFI, and QLIV…HLII.

This sequence belongs to the CPA3 antiporters (TC 2.A.63) subunit G family. May form a heterooligomeric complex that consists of seven subunits: mnhA1, mnhB1, mnhC1, mnhD1, mnhE1, mnhF1 and mnhG1.

It is found in the cell membrane. In terms of biological role, mnh complex is a Na(+)/H(+) antiporter involved in Na(+) excretion. The protein is Na(+)/H(+) antiporter subunit G1 (mnhG1) of Staphylococcus saprophyticus subsp. saprophyticus (strain ATCC 15305 / DSM 20229 / NCIMB 8711 / NCTC 7292 / S-41).